A 112-amino-acid chain; its full sequence is Small ribosomal subunit protein bS16 (112 aa).

It belongs to the bacterial ribosomal protein bS16 family.

This Karelsulcia muelleri (strain GWSS) (Sulcia muelleri) protein is Small ribosomal subunit protein bS16.